Consider the following 257-residue polypeptide: NAD-dependent protein deacylase (257 aa).

The Deacetylase sirtuin-type domain occupies 1–252; sequence MLGHAAKLLA…LRRVKDIMAE (252 aa). An NAD(+)-binding site is contributed by 20 to 39; it reads GAGISAESGIPTFRGRNGLW. Substrate-binding residues include Tyr64 and Arg67. 98-101 serves as a coordination point for NAD(+); the sequence is QNVD. The active-site Proton acceptor is the His116. The Zn(2+) site is built by Cys124, Cys127, Cys151, and Cys154. NAD(+) contacts are provided by residues 191-193, 217-219, and Ala235; these read GTS and NVE.

The protein belongs to the sirtuin family. Class III subfamily. It depends on Zn(2+) as a cofactor.

The protein resides in the cytoplasm. It catalyses the reaction N(6)-acetyl-L-lysyl-[protein] + NAD(+) + H2O = 2''-O-acetyl-ADP-D-ribose + nicotinamide + L-lysyl-[protein]. The catalysed reaction is N(6)-succinyl-L-lysyl-[protein] + NAD(+) + H2O = 2''-O-succinyl-ADP-D-ribose + nicotinamide + L-lysyl-[protein]. Its function is as follows. NAD-dependent lysine deacetylase and desuccinylase that specifically removes acetyl and succinyl groups on target proteins. Modulates the activities of several proteins which are inactive in their acylated form. Deacetylates the N-terminal lysine residue of Alba, the major archaeal chromatin protein and that, in turn, increases Alba's DNA binding affinity, thereby repressing transcription. This Thermococcus kodakarensis (strain ATCC BAA-918 / JCM 12380 / KOD1) (Pyrococcus kodakaraensis (strain KOD1)) protein is NAD-dependent protein deacylase.